The following is a 677-amino-acid chain: Methionine--tRNA ligase (677 aa).

Positions 15–25 (PYANGSIHLGH) match the 'HIGH' region motif. C146, C149, C159, and C162 together coordinate Zn(2+). The 'KMSKS' region motif lies at 333–337 (KMSKS). K336 is an ATP binding site. In terms of domain architecture, tRNA-binding spans 575–677 (DFAKVDLRVA…AGAKPGHQVK (103 aa)).

It belongs to the class-I aminoacyl-tRNA synthetase family. MetG type 1 subfamily. Homodimer. It depends on Zn(2+) as a cofactor.

It localises to the cytoplasm. The catalysed reaction is tRNA(Met) + L-methionine + ATP = L-methionyl-tRNA(Met) + AMP + diphosphate. Its function is as follows. Is required not only for elongation of protein synthesis but also for the initiation of all mRNA translation through initiator tRNA(fMet) aminoacylation. This Escherichia coli O6:K15:H31 (strain 536 / UPEC) protein is Methionine--tRNA ligase.